The primary structure comprises 174 residues: Methylated protein MJ0556 (174 aa).

2 CBS domains span residues 28 to 87 and 91 to 156; these read MISG…YLNV and MLKN…IIKE.

In terms of processing, methylated at an undetermined residue between Ser-2 and Asp-26.

This is Methylated protein MJ0556 from Methanocaldococcus jannaschii (strain ATCC 43067 / DSM 2661 / JAL-1 / JCM 10045 / NBRC 100440) (Methanococcus jannaschii).